Reading from the N-terminus, the 201-residue chain is ATP-dependent Clp protease proteolytic subunit (201 aa).

The active-site Nucleophile is Ser-98. The active site involves His-123.

The protein belongs to the peptidase S14 family. As to quaternary structure, fourteen ClpP subunits assemble into 2 heptameric rings which stack back to back to give a disk-like structure with a central cavity, resembling the structure of eukaryotic proteasomes.

The protein resides in the cytoplasm. The enzyme catalyses Hydrolysis of proteins to small peptides in the presence of ATP and magnesium. alpha-casein is the usual test substrate. In the absence of ATP, only oligopeptides shorter than five residues are hydrolyzed (such as succinyl-Leu-Tyr-|-NHMec, and Leu-Tyr-Leu-|-Tyr-Trp, in which cleavage of the -Tyr-|-Leu- and -Tyr-|-Trp bonds also occurs).. In terms of biological role, cleaves peptides in various proteins in a process that requires ATP hydrolysis. Has a chymotrypsin-like activity. Plays a major role in the degradation of misfolded proteins. The polypeptide is ATP-dependent Clp protease proteolytic subunit (Neorickettsia sennetsu (strain ATCC VR-367 / Miyayama) (Ehrlichia sennetsu)).